Reading from the N-terminus, the 496-residue chain is Aspartic proteinase (496 aa).

The first 24 residues, methionine 1–alanine 24, serve as a signal peptide directing secretion. A propeptide spans serine 25–threonine 59 (activation peptide). Residues tyrosine 77–alanine 493 enclose the Peptidase A1 domain. The active site involves aspartate 95. 2 disulfide bridges follow: cysteine 108–cysteine 114 and cysteine 273–cysteine 277. Residue aspartate 282 is part of the active site. The Saposin B-type domain maps to isoleucine 307–proline 407. Intrachain disulfides connect cysteine 312-cysteine 401, cysteine 337-cysteine 373, cysteine 343-cysteine 370, and cysteine 415-cysteine 452. Asparagine 387 carries N-linked (GlcNAc...) asparagine glycosylation.

Belongs to the peptidase A1 family.

The protein resides in the vacuole. Its function is as follows. Involved in the breakdown of propeptides of storage proteins in protein-storage vacuoles. The polypeptide is Aspartic proteinase (RAP) (Oryza sativa subsp. japonica (Rice)).